We begin with the raw amino-acid sequence, 298 residues long: Probable GTP 3',8-cyclase (298 aa).

Positions 4 to 230 constitute a Radical SAM core domain; that stretch reads KFGREIRSLR…RKKYIVDGLE (227 aa). Arg13 serves as a coordination point for GTP. Residues Cys20 and Cys24 each coordinate [4Fe-4S] cluster. Tyr26 contacts S-adenosyl-L-methionine. Cys27 provides a ligand contact to [4Fe-4S] cluster. Position 61 (Lys61) interacts with GTP. Gly65 is a binding site for S-adenosyl-L-methionine. Thr91 lines the GTP pocket. Ser115 contacts S-adenosyl-L-methionine. Lys152 contributes to the GTP binding site. 2 residues coordinate [4Fe-4S] cluster: Cys243 and Cys246. 248–250 contacts GTP; that stretch reads RIR. Cys260 is a binding site for [4Fe-4S] cluster.

The protein belongs to the radical SAM superfamily. MoaA family. [4Fe-4S] cluster is required as a cofactor.

It carries out the reaction GTP + AH2 + S-adenosyl-L-methionine = (8S)-3',8-cyclo-7,8-dihydroguanosine 5'-triphosphate + 5'-deoxyadenosine + L-methionine + A + H(+). It functions in the pathway cofactor biosynthesis; molybdopterin biosynthesis. Its function is as follows. Catalyzes the cyclization of GTP to (8S)-3',8-cyclo-7,8-dihydroguanosine 5'-triphosphate. This chain is Probable GTP 3',8-cyclase, found in Methanocaldococcus jannaschii (strain ATCC 43067 / DSM 2661 / JAL-1 / JCM 10045 / NBRC 100440) (Methanococcus jannaschii).